Here is a 364-residue protein sequence, read N- to C-terminus: UDP-N-acetylglucosamine--N-acetylmuramyl-(pentapeptide) pyrophosphoryl-undecaprenol N-acetylglucosamine transferase (364 aa).

UDP-N-acetyl-alpha-D-glucosamine-binding positions include 10–12, N124, S195, I250, and Q295; that span reads TGG.

Belongs to the glycosyltransferase 28 family. MurG subfamily.

It is found in the cell membrane. The enzyme catalyses Mur2Ac(oyl-L-Ala-gamma-D-Glu-L-Lys-D-Ala-D-Ala)-di-trans,octa-cis-undecaprenyl diphosphate + UDP-N-acetyl-alpha-D-glucosamine = beta-D-GlcNAc-(1-&gt;4)-Mur2Ac(oyl-L-Ala-gamma-D-Glu-L-Lys-D-Ala-D-Ala)-di-trans,octa-cis-undecaprenyl diphosphate + UDP + H(+). Its pathway is cell wall biogenesis; peptidoglycan biosynthesis. In terms of biological role, cell wall formation. Catalyzes the transfer of a GlcNAc subunit on undecaprenyl-pyrophosphoryl-MurNAc-pentapeptide (lipid intermediate I) to form undecaprenyl-pyrophosphoryl-MurNAc-(pentapeptide)GlcNAc (lipid intermediate II). The protein is UDP-N-acetylglucosamine--N-acetylmuramyl-(pentapeptide) pyrophosphoryl-undecaprenol N-acetylglucosamine transferase of Levilactobacillus brevis (strain ATCC 367 / BCRC 12310 / CIP 105137 / JCM 1170 / LMG 11437 / NCIMB 947 / NCTC 947) (Lactobacillus brevis).